Here is a 440-residue protein sequence, read N- to C-terminus: Thymidine phosphorylase (440 aa).

It belongs to the thymidine/pyrimidine-nucleoside phosphorylase family. In terms of assembly, homodimer.

The enzyme catalyses thymidine + phosphate = 2-deoxy-alpha-D-ribose 1-phosphate + thymine. Its pathway is pyrimidine metabolism; dTMP biosynthesis via salvage pathway; dTMP from thymine: step 1/2. Functionally, the enzymes which catalyze the reversible phosphorolysis of pyrimidine nucleosides are involved in the degradation of these compounds and in their utilization as carbon and energy sources, or in the rescue of pyrimidine bases for nucleotide synthesis. The sequence is that of Thymidine phosphorylase from Shigella dysenteriae serotype 1 (strain Sd197).